Consider the following 156-residue polypeptide: Small ribosomal subunit protein uS7 (156 aa).

This sequence belongs to the universal ribosomal protein uS7 family. As to quaternary structure, part of the 30S ribosomal subunit. Contacts proteins S9 and S11.

Functionally, one of the primary rRNA binding proteins, it binds directly to 16S rRNA where it nucleates assembly of the head domain of the 30S subunit. Is located at the subunit interface close to the decoding center, probably blocks exit of the E-site tRNA. In Geobacillus sp. (strain WCH70), this protein is Small ribosomal subunit protein uS7.